The following is a 318-amino-acid chain: Potassium channel subfamily K member 15 (318 aa).

The Cytoplasmic portion of the chain corresponds to 1–8 (MRKQSART). A helical membrane pass occupies residues 9–29 (AALILCILSYLLVGAAVFDAL). Positions 80–101 (FAGSFYFAITVITTIGYGHAAP) form an intramembrane region, pore-forming. A helical transmembrane segment spans residues 108–128 (VFCMFYALLGIPLTLVTFQSL). The Cytoplasmic segment spans residues 129–158 (GERLNALVRCLLLAAKRCLGLRRPHVSAEN). A helical membrane pass occupies residues 159–179 (MVVAGLLLCAATLALGAAAFA). The pore-forming intramembrane region spans 189–209 (AYYYCFITLTTIGFGDFVALQ). A helical transmembrane segment spans residues 223-243 (FSFLYILLGLTVIGAFLNLVV). At 244–318 (LRFLASAEAP…DRLRARRKSI (75 aa)) the chain is on the cytoplasmic side. Positions 296–318 (LSPEAVHDCHSSPDRLRARRKSI) are disordered. A compositionally biased stretch (basic and acidic residues) spans 300-311 (AVHDCHSSPDRL).

The protein belongs to the two pore domain potassium channel (TC 1.A.1.8) family. As to quaternary structure, heterodimer. In terms of processing, phosphorylated. In terms of tissue distribution, brain-specific. Highly expressed in auditory nuclei, in Purkinje cells and in olfactory bulb mitral cells.

The protein localises to the membrane. Probable potassium channel subunit. No channel activity observed in heterologous systems. May need to associate with another protein to form a functional channel. This is Potassium channel subfamily K member 15 (Kcnk15) from Rattus norvegicus (Rat).